Here is a 180-residue protein sequence, read N- to C-terminus: Protein YOP1 (180 aa).

S2 carries the N-acetylserine modification. Residues 2–17 form an interaction with YIP1 region; that stretch reads SEYASSIHSQMKQFDT. Topologically, residues 2–35 are cytoplasmic; sequence SEYASSIHSQMKQFDTKYSGNRILQQLENKTNLP. A helical membrane pass occupies residues 36–55; sequence KSYLVAGLGFAYLLLIFINV. At 56-57 the chain is on the lumenal side; it reads GG. Residues 58–78 form a helical membrane-spanning segment; the sequence is VGEILSNFAGFVLPAYLSLVA. The Cytoplasmic segment spans residues 79 to 88; that stretch reads LKTPTSTDDT. A helical transmembrane segment spans residues 89-105; that stretch reads QLLTYWIVFSFLSVIEF. The Lumenal segment spans residues 106 to 108; sequence WSK. The chain crosses the membrane as a helical span at residues 109–127; sequence AILYLIPFYWFLKTVFLIY. Residues 128 to 180 lie on the Cytoplasmic side of the membrane; sequence IALPQTGGARMIYQKIVAPLTDRYILRDVSKTEKDEIRASVNEASKATGASVH.

Belongs to the DP1 family. As to quaternary structure, oligomer. Interacts with YIP1.

It is found in the endoplasmic reticulum membrane. The protein resides in the golgi apparatus membrane. In terms of biological role, required to generate and maintain the structure of the tubular endoplasmic reticulum network and the vacuole. Induces high curvature in membranes and causes membrane tubule formation. Involved in membrane/vesicle trafficking. This chain is Protein YOP1 (YOP1), found in Saccharomyces cerevisiae (strain ATCC 204508 / S288c) (Baker's yeast).